A 331-amino-acid chain; its full sequence is Mitochondrial glycine transporter (331 aa).

Solcar repeat units lie at residues 19–103 (SRTT…LRQG), 132–216 (LSNW…LKRR), and 234–318 (SSSS…LILR). 6 helical membrane passes run 25 to 50 (FAAGLCSGLTSSILLQPADLLKTRVQ), 78 to 104 (GTLPSALRTGFGSALYFTSLNALRQGL), 138 to 163 (LATGAVARTAAGFVMMPVTVLKVRYE), 191 to 214 (GFGATAARDAPYAGLYVLFYEQLK), 238 to 264 (INFVSGGLAAGLATAITNPFDAVKTRL), and 293 to 311 (GLGLRITRKALSSALAWTV).

This sequence belongs to the mitochondrial carrier (TC 2.A.29) family. SLC25A38 subfamily.

It is found in the mitochondrion inner membrane. It carries out the reaction glycine(in) = glycine(out). In terms of biological role, mitochondrial glycine transporter that imports glycine into the mitochondrial matrix. Plays an important role in providing glycine for the first enzymatic step in heme biosynthesis, the condensation of glycine with succinyl-CoA to produce 5-aminolevulinate (ALA) in the mitochondrial matrix. The polypeptide is Mitochondrial glycine transporter (Neosartorya fischeri (strain ATCC 1020 / DSM 3700 / CBS 544.65 / FGSC A1164 / JCM 1740 / NRRL 181 / WB 181) (Aspergillus fischerianus)).